We begin with the raw amino-acid sequence, 312 residues long: DDRGK domain-containing protein 1 (312 aa).

The Lumenal segment spans residues 1-2; sequence ME. A helical transmembrane segment spans residues 3–23; it reads LIILVGIAIALLVVIITLYLL. Residues 24–312 are Cytoplasmic-facing; sequence QKKNAAPETK…ISAGGEEASS (289 aa). Positions 30–163 are disordered; the sequence is PETKPAAAPQ…KQQEDLEAEV (134 aa). Residues 52-85 show a composition bias toward low complexity; the sequence is RRAQIARNQRNRLRQNAPAAPAGQVAPAAGAPAA. The span at 90–99 shows a compositional bias: acidic residues; the sequence is DHEDEGQVDA. The segment covering 110–163 has biased composition (basic and acidic residues); the sequence is LDEKMGAKKRAKMEAKEQKRLQREQELHDREQRKVKEAKEEAERKQQEDLEAEV.

This sequence belongs to the DDRGK1 family. As to quaternary structure, interacts with Atg9; the interaction is transient.

It is found in the endoplasmic reticulum membrane. Functionally, substrate adapter for ufmylation, the covalent attachment of the ubiquitin-like modifier UFM1 to substrate proteins. Required for ufmylation of Atg9; protects the nervous system during aging, possibly by stabilizing Atg9 and supporting its function. The protein is DDRGK domain-containing protein 1 of Drosophila erecta (Fruit fly).